Consider the following 590-residue polypeptide: Muscarinic acetylcholine receptor M3 (590 aa).

At methionine 1–glutamine 67 the chain is on the extracellular side. N-linked (GlcNAc...) asparagine glycosylation is found at asparagine 6, asparagine 7, asparagine 15, asparagine 41, asparagine 48, and asparagine 53. The helical transmembrane segment at valine 68–valine 91 threads the bilayer. Residues alanine 92–asparagine 104 are Cytoplasmic-facing. A helical membrane pass occupies residues tyrosine 105–isoleucine 130. Residues methionine 131–aspartate 142 are Extracellular-facing. Cysteine 141 and cysteine 221 are oxidised to a cystine. The helical transmembrane segment at leucine 143–phenylalanine 164 threads the bilayer. Residues aspartate 165–arginine 184 lie on the Cytoplasmic side of the membrane. Residues alanine 185–phenylalanine 206 form a helical membrane-spanning segment. Residues tryptophan 207–proline 229 are Extracellular-facing. A helical transmembrane segment spans residues threonine 230 to tryptophan 252. The Cytoplasmic portion of the chain corresponds to arginine 253–glutamine 491. The Basolateral sorting signal signature appears at alanine 275–valine 281. Residues alanine 324–isoleucine 357 are disordered. Low complexity predominate over residues serine 334 to serine 345. Serine 385 is modified (phosphoserine). Residues threonine 492–asparagine 514 traverse the membrane as a helical segment. The Extracellular segment spans residues threonine 515–tryptophan 526. A disulfide bond links cysteine 517 and cysteine 520. A helical transmembrane segment spans residues asparagine 527–leucine 546. Topologically, residues cysteine 547–leucine 590 are cytoplasmic.

The protein belongs to the G-protein coupled receptor 1 family. Muscarinic acetylcholine receptor subfamily. CHRM3 sub-subfamily. In terms of assembly, homodimer; the dimers can form tetramers. Interacts with NALCN. Interacts with TMEM147.

It localises to the cell membrane. The protein resides in the postsynaptic cell membrane. The protein localises to the basolateral cell membrane. It is found in the endoplasmic reticulum membrane. Its function is as follows. The muscarinic acetylcholine receptor mediates various cellular responses, including inhibition of adenylate cyclase, breakdown of phosphoinositides and modulation of potassium channels through the action of G proteins. Primary transducing effect is Pi turnover. This is Muscarinic acetylcholine receptor M3 (CHRM3) from Sus scrofa (Pig).